A 38-amino-acid chain; its full sequence is Photosystem II reaction center protein M (38 aa).

The helical transmembrane segment at 7–27 threads the bilayer; it reads GFVASILFVLVPTVFLLILYI.

Belongs to the PsbM family. As to quaternary structure, PSII is composed of 1 copy each of membrane proteins PsbA, PsbB, PsbC, PsbD, PsbE, PsbF, PsbH, PsbI, PsbJ, PsbK, PsbL, PsbM, PsbT, PsbX, PsbY, PsbZ, Psb30/Ycf12, peripheral proteins PsbO, CyanoQ (PsbQ), PsbU, PsbV and a large number of cofactors. It forms dimeric complexes.

It localises to the cellular thylakoid membrane. Its function is as follows. One of the components of the core complex of photosystem II (PSII). PSII is a light-driven water:plastoquinone oxidoreductase that uses light energy to abstract electrons from H(2)O, generating O(2) and a proton gradient subsequently used for ATP formation. It consists of a core antenna complex that captures photons, and an electron transfer chain that converts photonic excitation into a charge separation. This subunit is found at the monomer-monomer interface. This Nostoc punctiforme (strain ATCC 29133 / PCC 73102) protein is Photosystem II reaction center protein M.